The sequence spans 259 residues: Eukaryotic translation initiation factor 4E1 (259 aa).

The disordered stretch occupies residues 1 to 70; it reads MQSDFHRMKN…TATTTAPAGD (70 aa). Residues 18-27 show a composition bias toward polar residues; that stretch reads FKTSAPSTEQ. The span at 41-51 shows a compositional bias: basic and acidic residues; that stretch reads EAKDVKPKEDP. Positions 54–70 are enriched in low complexity; the sequence is TGEPAGNTATTTAPAGD. Residues 100 to 101, 146 to 147, and 199 to 204 each bind mRNA; these read WE and RGKSNK.

The protein belongs to the eukaryotic initiation factor 4E family. EIF4F is a multi-subunit complex, the composition of which varies with external and internal environmental conditions. It is composed of at least eIF4A, eIF4E1 and eIF4G1. Recruited by cup in oocytes and in early embryos, preventing the interaction with eIF4G. The interaction with cup therefore prevents the translation of key transcripts such as oskar (osk) and nanos (nos) in some regions in the early embryo. Interacts with mxt. Interacts with 4E-T and Thor. Forms a RNP containing at least me31B, eIF4E1, cup, tral and pAbp; this interaction is required for the translational silencing of maternal mRNAs during the maternal-to-zygotic transition. In terms of processing, phosphorylation increases the ability of the protein to bind to mRNA caps and to form the eIF4F complex. Expressed at the posterior end of developing oocytes (at protein level). Preferential expression in the pole cells, at different developmental stages.

The protein resides in the cytoplasm. It localises to the cytoplasmic ribonucleoprotein granule. Its subcellular location is the nucleus. It is found in the nuclear body. Recognizes and binds the 7-methylguanosine (m7G)-containing mRNA cap during an early step in the initiation of protein synthesis and facilitates ribosome binding by inducing the unwinding of the mRNAs secondary structures. In 0-1 hour embryos, forms a complex with me31B, cup, tral and pAbp which binds to various mRNAs including maternal mRNAs, and down-regulates their expression during the maternal-to-zygotic transition. This Drosophila melanogaster (Fruit fly) protein is Eukaryotic translation initiation factor 4E1.